The chain runs to 134 residues: MPPKTRAAGAKKVRRKEKKNVAHGHAHIKSTFNNTIVSITDPSGNVISWASAGHVGFKGSRKSTPFAAQMAAENAARKAQEHGMRKVDVFVKGPGSGRETAIRSLQAAGLEVGAIQDVTPTPHNGCRPPKRRRV.

This sequence belongs to the universal ribosomal protein uS11 family. In terms of assembly, part of the 30S ribosomal subunit. Interacts with proteins S7 and S18. Binds to IF-3.

Functionally, located on the platform of the 30S subunit, it bridges several disparate RNA helices of the 16S rRNA. Forms part of the Shine-Dalgarno cleft in the 70S ribosome. The polypeptide is Small ribosomal subunit protein uS11 (Frankia casuarinae (strain DSM 45818 / CECT 9043 / HFP020203 / CcI3)).